Consider the following 171-residue polypeptide: ATP synthase subunit b (171 aa).

A helical transmembrane segment spans residues 2-22 (FLVKMVLGFLIFLSPLCATGL).

This sequence belongs to the ATPase B chain family. As to quaternary structure, F-type ATPases have 2 components, F(1) - the catalytic core - and F(0) - the membrane proton channel. F(1) has five subunits: alpha(3), beta(3), gamma(1), delta(1), epsilon(1). F(0) has three main subunits: a(1), b(2) and c(10-14). The alpha and beta chains form an alternating ring which encloses part of the gamma chain. F(1) is attached to F(0) by a central stalk formed by the gamma and epsilon chains, while a peripheral stalk is formed by the delta and b chains.

The protein localises to the cell inner membrane. F(1)F(0) ATP synthase produces ATP from ADP in the presence of a proton or sodium gradient. F-type ATPases consist of two structural domains, F(1) containing the extramembraneous catalytic core and F(0) containing the membrane proton channel, linked together by a central stalk and a peripheral stalk. During catalysis, ATP synthesis in the catalytic domain of F(1) is coupled via a rotary mechanism of the central stalk subunits to proton translocation. In terms of biological role, component of the F(0) channel, it forms part of the peripheral stalk, linking F(1) to F(0). This Helicobacter pylori (strain Shi470) protein is ATP synthase subunit b.